A 366-amino-acid chain; its full sequence is Peptide chain release factor 2 (366 aa).

Q251 is modified (N5-methylglutamine).

It belongs to the prokaryotic/mitochondrial release factor family. Methylated by PrmC. Methylation increases the termination efficiency of RF2.

Its subcellular location is the cytoplasm. Peptide chain release factor 2 directs the termination of translation in response to the peptide chain termination codons UGA and UAA. The polypeptide is Peptide chain release factor 2 (Campylobacter concisus (strain 13826)).